We begin with the raw amino-acid sequence, 104 residues long: Replication factor A protein 3 (104 aa).

It belongs to the replication factor A protein 3 family. Component of the heterotrimeric canonical replication protein A complex (RPA).

It localises to the nucleus. Functionally, as part of the replication protein A (RPA/RP-A), a single-stranded DNA-binding heterotrimeric complex, may play an essential role in DNA replication, recombination and repair. Binds and stabilizes single-stranded DNA intermediates, preventing complementary DNA reannealing and recruiting different proteins involved in DNA metabolism. This chain is Replication factor A protein 3 (ssb3), found in Schizosaccharomyces pombe (strain 972 / ATCC 24843) (Fission yeast).